A 215-amino-acid polypeptide reads, in one-letter code: MSDNAQLTGLCDRFRGFYPVVIDVETAGFNAKTDALLEIAAITLKMDEQGWLMPDTTLHFHVEPFVGANLQPEALAFNGIDPNDPDRGAVSEYEALHEIFKVVRKGIKASGCNRAIMVAHNANFDHSFMIAAAERASLKRNPFHPFATFDTAALAGLALGQTVLSKACQTAGMDFDSTQAHSALYDTERTAVLFCEIVNRWKRLGGWPLPAAEEV.

An Exonuclease domain is found at 20–194 (VVIDVETAGF…YDTERTAVLF (175 aa)). Residues Asp23, Glu25, His181, and Asp186 each coordinate Mg(2+). The Proton donor/acceptor role is filled by His181.

Belongs to the RNase T family. As to quaternary structure, homodimer. Requires Mg(2+) as cofactor.

Trims short 3' overhangs of a variety of RNA species, leaving a one or two nucleotide 3' overhang. Responsible for the end-turnover of tRNA: specifically removes the terminal AMP residue from uncharged tRNA (tRNA-C-C-A). Also appears to be involved in tRNA biosynthesis. The protein is Ribonuclease T of Shigella boydii serotype 4 (strain Sb227).